Reading from the N-terminus, the 105-residue chain is uncharacterized protein (105 aa).

This is an uncharacterized protein from Haemophilus influenzae (strain ATCC 51907 / DSM 11121 / KW20 / Rd).